A 1141-amino-acid chain; its full sequence is cGMP-inhibited 3',5'-cyclic phosphodiesterase 3A (1141 aa).

The tract at residues 1-41 (MAVRGEAAQDWAKPGLRGPSPAPVARGDHRCRGGSPSSPRG) is disordered. A helical transmembrane segment spans residues 62 to 82 (SALCAGSLSVLLALLVRLVGG). Residues 89–111 (ESSQEAAAEEEEEEGARGGVFPG) are disordered. The next 5 helical transmembrane spans lie at 127–147 (LQPAALLFSLLCAFFWMGLCL), 157–177 (AVALLAACCAGEALVQLSLGV), 182–202 (LLSLPAAGVLLSCLGGATWLV), 207–227 (LGVLMVALTSALRTVALVSLE), and 229–249 (FKVAWRPYLAYLAAVLGLLLA). Positions 262 to 309 (PAPPRERFGSQSSARTKEEIPGWKRRRRSSSVVAGEMSGCGGKSHRRT) are disordered. S310 carries the phosphoserine modification. Residues 433 to 445 (RVSSTWTTTTSAT) are compositionally biased toward low complexity. Positions 433-479 (RVSSTWTTTTSATGLPTLEPAPVRRDRSASIKPHEAPSPSAVNPDSW) are disordered. Over residues 454-467 (PVRRDRSASIKPHE) the composition is skewed to basic and acidic residues. S492, S520, S524, and S533 each carry phosphoserine. Residues 504-643 (HVKAKKQNRP…SDILQNDEEA (140 aa)) are disordered. A compositionally biased stretch (pro residues) spans 522-532 (VPSPSSSPPQG). The span at 618–637 (TSQVTSDYETNNNSDSSDIL) shows a compositional bias: polar residues. The tract at residues 669 to 1141 (KPILAPEPLV…EETLAPQPDL (473 aa)) is interaction with SLFN12. The 420-residue stretch at 674-1093 (PEPLVMDNLD…MMWKKVIEEE (420 aa)) folds into the PDEase domain. H752 functions as the Proton donor in the catalytic mechanism. AMP is bound at residue H752. Mn(2+) contacts are provided by H756, H836, D837, and D950. AMP contacts are provided by D837, D950, and Q1001. D837 provides a ligand contact to Mg(2+). Disordered stretches follow at residues 1024-1062 (GKWVDDSDDSGDTDDPEEEEEEAETPHEEETCENSEAPR) and 1098-1141 (GTEN…QPDL). The segment covering 1029–1046 (DSDDSGDTDDPEEEEEEA) has biased composition (acidic residues). Residue S1033 is modified to Phosphoserine. T1036 carries the post-translational modification Phosphothreonine. Residues 1098-1113 (GTENQAPDQAPLQHSS) are compositionally biased toward polar residues. K1120 is covalently cross-linked (Glycyl lysine isopeptide (Lys-Gly) (interchain with G-Cter in SUMO2)).

It belongs to the cyclic nucleotide phosphodiesterase family. PDE3 subfamily. In terms of assembly, homodimer. Interacts with PDE3A; direct low affinity interaction which is stimulated by binding of 17beta-estradiol/E2 to PDE3A and that positively regulates the ribonuclease activity of SLFN12. Requires Mn(2+) as cofactor. Mg(2+) is required as a cofactor.

It is found in the membrane. It localises to the cytoplasm. The protein resides in the cytosol. The catalysed reaction is a nucleoside 3',5'-cyclic phosphate + H2O = a nucleoside 5'-phosphate + H(+). It carries out the reaction 3',5'-cyclic AMP + H2O = AMP + H(+). It catalyses the reaction 3',5'-cyclic GMP + H2O = GMP + H(+). The enzyme catalyses 3',5'-cyclic UMP + H2O = UMP + H(+). Its function is as follows. Cyclic nucleotide phosphodiesterase with specificity for the second messengers cAMP and cGMP, which are key regulators of many important physiological processes. Also has activity toward cUMP. Independently of its catalytic activity it is part of an E2/17beta-estradiol-induced pro-apoptotic signaling pathway. E2 stabilizes the PDE3A/SLFN12 complex in the cytosol, promoting the dephosphorylation of SLFN12 and activating its pro-apoptotic ribosomal RNA/rRNA ribonuclease activity. This apoptotic pathway might be relevant in tissues with high concentration of E2 and be for instance involved in placenta remodeling. The sequence is that of cGMP-inhibited 3',5'-cyclic phosphodiesterase 3A from Rattus norvegicus (Rat).